The chain runs to 155 residues: Small ribosomal subunit protein uS9 (155 aa).

The protein belongs to the universal ribosomal protein uS9 family.

This is Small ribosomal subunit protein uS9 from Rhizobium etli (strain CIAT 652).